A 329-amino-acid chain; its full sequence is GTP 3',8-cyclase (329 aa).

One can recognise a Radical SAM core domain in the interval 8-234 (AFARKFYYLR…QLRQRSDGPA (227 aa)). Arg17 is a binding site for GTP. [4Fe-4S] cluster contacts are provided by Cys24 and Cys28. Tyr30 serves as a coordination point for S-adenosyl-L-methionine. Residue Cys31 participates in [4Fe-4S] cluster binding. A GTP-binding site is contributed by Arg68. S-adenosyl-L-methionine is bound at residue Gly72. Thr99 contributes to the GTP binding site. Ser123 is an S-adenosyl-L-methionine binding site. Lys160 is a binding site for GTP. Met194 contributes to the S-adenosyl-L-methionine binding site. [4Fe-4S] cluster contacts are provided by Cys257 and Cys260. 262 to 264 (RLR) contacts GTP. Cys274 is a binding site for [4Fe-4S] cluster.

The protein belongs to the radical SAM superfamily. MoaA family. Monomer and homodimer. Requires [4Fe-4S] cluster as cofactor.

It catalyses the reaction GTP + AH2 + S-adenosyl-L-methionine = (8S)-3',8-cyclo-7,8-dihydroguanosine 5'-triphosphate + 5'-deoxyadenosine + L-methionine + A + H(+). The protein operates within cofactor biosynthesis; molybdopterin biosynthesis. Its function is as follows. Catalyzes the cyclization of GTP to (8S)-3',8-cyclo-7,8-dihydroguanosine 5'-triphosphate. This chain is GTP 3',8-cyclase, found in Salmonella newport (strain SL254).